The chain runs to 240 residues: Putative exosome complex component RRP41 (240 aa).

The protein belongs to the RNase PH family. As to quaternary structure, component of the RNA exosome complex.

It is found in the cytoplasm. The protein resides in the nucleus. Its subcellular location is the nucleolus. It localises to the nucleoplasm. Functionally, non-catalytic component of the RNA exosome complex which has 3'-&gt;5' exoribonuclease activity and participates in a multitude of cellular RNA processing and degradation events. The chain is Putative exosome complex component RRP41 (exos-4.1) from Caenorhabditis briggsae.